A 226-amino-acid chain; its full sequence is MKAVLLISGGMDSLVTTAIAAEEKLELAAMHVNYGQRTWQKELECFRRICNHYQIRHRLEIEAGYLAQTGGSSLTDPAMPVSGADLQGTDIPTSYVPFRNAGFLSMAVSWSEVIGAGKIFIGAVEEDSSGYPDCRQVFYDAFNRVIELGTRPDTAIEIVTPLISMQKCDIVLKGMELNAPFACSWSCYKSEGRACGVCDSCARRLRAFELTGVRDPIEYEVRPKYI.

7–17 (ISGGMDSLVTT) contributes to the ATP binding site. Positions 187, 195, 198, and 201 each coordinate Zn(2+).

This sequence belongs to the QueC family. It depends on Zn(2+) as a cofactor.

It carries out the reaction 7-carboxy-7-deazaguanine + NH4(+) + ATP = 7-cyano-7-deazaguanine + ADP + phosphate + H2O + H(+). It participates in purine metabolism; 7-cyano-7-deazaguanine biosynthesis. In terms of biological role, catalyzes the ATP-dependent conversion of 7-carboxy-7-deazaguanine (CDG) to 7-cyano-7-deazaguanine (preQ(0)). This chain is 7-cyano-7-deazaguanine synthase, found in Chlorobium limicola (strain DSM 245 / NBRC 103803 / 6330).